Reading from the N-terminus, the 417-residue chain is MEPFDPAELPELLKLYYRRLFPYAQYYRWLNYGGVTKNYFQHREFSFTLKDDIYIRYQSFNNQSELEKEMQKMNPYKIDIGAVYSHRPNQHNTVKLGAFQAQEKELVFDIDMTDYDDVRRCCSSADICSKCWTLMTMAMRIIDRALKEDFGFKHRLWVYSGRRGVHCWVCDESVRKLSSAVRSGIVEYLSLVKGGQDVKKKVHLNEKVHPFVRKSINIIKKYFEEYALVGQDILENKENWDKILALVPETIHDELQRGFQKFHSSPQRWEHLRKVANSSQNMKNDKCGPWLEWEVMLQYCFPRLDVNVSKGVNHLLKSPFSVHPKTGRISVPIDFHKVDQFDPFTVPTISAICRELDMVSTHEKEKEENEADSKHRVRGYKKTSLAPYVKVFEQFLENLDKSRKGELLKKSDLQKDF.

The residue at position 1 (Met-1) is an N-acetylmethionine. Active-site residues include Glu-44, Asp-109, and Asp-111. Positions 109 and 111 each coordinate Mg(2+). Mn(2+) contacts are provided by Asp-109 and Asp-111. An a ribonucleoside 5'-triphosphate-binding site is contributed by 109–111 (DID). Cys-121, Cys-122, Cys-128, and Cys-131 together coordinate Zn(2+). The Zinc knuckle motif signature appears at 121-131 (CCSSADICSKC). 160 to 166 (SGRRGVH) provides a ligand contact to a ribonucleoside 5'-triphosphate. A Mg(2+)-binding site is contributed by Asp-305. Asp-305 contributes to the Mn(2+) binding site. A ribonucleoside 5'-triphosphate-binding positions include 314-317 (HLLK) and His-323.

This sequence belongs to the eukaryotic-type primase small subunit family. As to quaternary structure, heterodimer of a catalytic subunit PRIM1 and a regulatory subunit PRIM2, also known as the DNA primase complex. Interacts with PRIM2/p58 (via C-terminus). Component of the alpha DNA polymerase complex (also known as the alpha DNA polymerase-primase complex) consisting of four subunits: the catalytic subunit POLA1, the regulatory subunit POLA2, and the primase complex subunits PRIM1 and PRIM2 respectively. Within the complex, POLA1 directly interacts with PRIM2. Mg(2+) serves as cofactor. Mn(2+) is required as a cofactor.

It catalyses the reaction ssDNA + n NTP = ssDNA/pppN(pN)n-1 hybrid + (n-1) diphosphate.. The presence of the regulatory subunit PRIM2/p58 accelerates the kinetics of initiation and primer extension. Catalytic subunit of the DNA primase complex and component of the DNA polymerase alpha complex (also known as the alpha DNA polymerase-primase complex) which play an essential role in the initiation of DNA synthesis. During the S phase of the cell cycle, the DNA polymerase alpha complex (composed of a catalytic subunit POLA1, an accessory subunit POLA2 and two primase subunits, the catalytic subunit PRIM1 and the regulatory subunit PRIM2) is recruited to DNA at the replicative forks via direct interactions with MCM10 and WDHD1. The primase subunit of the polymerase alpha complex initiates DNA synthesis by oligomerising short RNA primers on both leading and lagging strands. These primers are initially extended by the polymerase alpha catalytic subunit and subsequently transferred to polymerase delta and polymerase epsilon for processive synthesis on the lagging and leading strand, respectively. In the primase complex, both subunits are necessary for the initial di-nucleotide formation, but the extension of the primer depends only on the catalytic subunit. Can add both ribo- and deoxynucleotides during elongation of the primers. Synthesizes 9-mer RNA primers (also known as the 'unit length' RNA primers). Incorporates only ribonucleotides in the presence of ribo- and deoxy-nucleotide triphosphates (rNTPs, dNTPs). Requires template thymine or cytidine to start the RNA primer synthesis, with an adenine or guanine at its 5'-end. Binds single stranded DNA. In Mus musculus (Mouse), this protein is DNA primase small subunit (Prim1).